The chain runs to 673 residues: MESTTSSPQPPPSDALEAFPQKSMEPADIVVLVLYFLFVLAVGLWSTVRTKRDTVKGYFLAGGDMVWWPVGASLFASNVGSGHFIGLAGSGAAVGISVAAYELNGLFSVLMLAWIFLPIYIAGQVTTMPEYLKRRFGGSRIPITLASIYPSTHSLTILQVDMYAGAIFIQQSLHLDLYLAIVGLLAVTALYTVAGGLAAVIYTDALQTVIMLIGAFILMGYSFAAVGGMEGLKDQYFLALASNRSENSSCGLPREDAFHIFRDPLTSDLPWPGILFGMSIPSLWYWCTDQVIVQRSLAAKNLSHAKGGSLMAAYLKVLPLFLMVFPGMVSRILFPDQVACAHPDICQRVCSNPSGCSDIAYPKLVLELLPTGLRGLMMAVMVAALMSSLTSIFNSASTIFTMDLWHHIRPRASERELMIVGRVFVLALVLVSILWIPVVQASQGGQLFIYIQSISSYLQPPVAVVFIMGCFWKRTNEKGAFSGLILGLLLGLVRLILDFVYVQPRCDQPDDRPAVVKDVHYLYFSMILSSTTLITVFTVSWFTETPSKEMVSRLTWFTRHEPVAQKDSVPPENPLSLTISQNGTTEATGISIQLESVQEATTKAHSDGVSPKQSKVLKAILWLCGMEKDKEEPPSKVEPVIVSLEENPLVKTLLDVNCIVCISCAIFLWGYFA.

Residues 1-27 (MESTTSSPQPPPSDALEAFPQKSMEPA) lie on the Extracellular side of the membrane. The chain crosses the membrane as a helical span at residues 28–48 (DIVVLVLYFLFVLAVGLWSTV). Residues 49 to 56 (RTKRDTVK) lie on the Cytoplasmic side of the membrane. The helical transmembrane segment at 57–77 (GYFLAGGDMVWWPVGASLFAS) threads the bilayer. N78 is a topological domain (extracellular). The chain crosses the membrane as a helical span at residues 79–99 (VGSGHFIGLAGSGAAVGISVA). The Cytoplasmic portion of the chain corresponds to 100–102 (AYE). The helical transmembrane segment at 103–123 (LNGLFSVLMLAWIFLPIYIAG) threads the bilayer. Residues 124–180 (QVTTMPEYLKRRFGGSRIPITLASIYPSTHSLTILQVDMYAGAIFIQQSLHLDLYLA) lie on the Extracellular side of the membrane. A helical transmembrane segment spans residues 181–201 (IVGLLAVTALYTVAGGLAAVI). At 202 to 208 (YTDALQT) the chain is on the cytoplasmic side. The helical transmembrane segment at 209 to 229 (VIMLIGAFILMGYSFAAVGGM) threads the bilayer. Residues 230–272 (EGLKDQYFLALASNRSENSSCGLPREDAFHIFRDPLTSDLPWP) lie on the Extracellular side of the membrane. Residues 273–293 (GILFGMSIPSLWYWCTDQVIV) form a helical membrane-spanning segment. The Cytoplasmic portion of the chain corresponds to 294–308 (QRSLAAKNLSHAKGG). A helical transmembrane segment spans residues 309–329 (SLMAAYLKVLPLFLMVFPGMV). The Extracellular segment spans residues 330–375 (SRILFPDQVACAHPDICQRVCSNPSGCSDIAYPKLVLELLPTGLRG). Residues 376–396 (LMMAVMVAALMSSLTSIFNSA) form a helical membrane-spanning segment. The Cytoplasmic segment spans residues 397-418 (STIFTMDLWHHIRPRASERELM). Residues 419-439 (IVGRVFVLALVLVSILWIPVV) form a helical membrane-spanning segment. Topologically, residues 440-446 (QASQGGQ) are extracellular. Residues 447–467 (LFIYIQSISSYLQPPVAVVFI) form a helical membrane-spanning segment. The Cytoplasmic segment spans residues 468 to 479 (MGCFWKRTNEKG). The helical transmembrane segment at 480 to 500 (AFSGLILGLLLGLVRLILDFV) threads the bilayer. At 501-521 (YVQPRCDQPDDRPAVVKDVHY) the chain is on the extracellular side. Residues 522 to 542 (LYFSMILSSTTLITVFTVSWF) form a helical membrane-spanning segment. At 543–652 (TETPSKEMVS…SLEENPLVKT (110 aa)) the chain is on the cytoplasmic side. Residues 653 to 673 (LLDVNCIVCISCAIFLWGYFA) traverse the membrane as a helical segment.

It belongs to the sodium:solute symporter (SSF) (TC 2.A.21) family. As to expression, expressed in kidney and small intestine.

The protein resides in the membrane. It localises to the apical cell membrane. The enzyme catalyses myo-inositol(out) + 2 Na(+)(out) = myo-inositol(in) + 2 Na(+)(in). It catalyses the reaction 1D-chiro-inositol(out) + 2 Na(+)(out) = 1D-chiro-inositol(in) + 2 Na(+)(in). It carries out the reaction D-glucose(out) + 2 Na(+)(out) = D-glucose(in) + 2 Na(+)(in). The catalysed reaction is D-xylose(out) + 2 Na(+)(out) = D-xylose(in) + 2 Na(+)(in). MI transport activity inhibited by D-chiro-inositol (DCI), phlorizin (Pz) and sodium (Na(+)). Insulin increases D-chiro-inositol uptake. In terms of biological role, involved in the sodium-dependent cotransport of myo-inositol (MI) with a Na(+):MI stoichiometry of 2:1. Exclusively responsible for apical MI transport and absorption in intestine. Can also transport D-chiro-inositol (DCI) but not L-fucose. Exhibits stereospecific cotransport of both D-glucose and D-xylose. May induce apoptosis through the TNF-alpha, PDCD1 pathway. May play a role in the regulation of MI concentration in serum, involving reabsorption in at least the proximal tubule of the kidney. This is Sodium/myo-inositol cotransporter 2 from Rattus norvegicus (Rat).